The primary structure comprises 174 residues: MRTYISGSRRLSNIFWALTITLGGLGFFLNGCSSYFNTNLLIFSDASSIAFIPQGIILMFYGTVALILGLFLCLTIIWDVGFGYNDYNADQITVYRKGFPGKNRELNLTFPSEVVKSIKVRVTEGLNPRRQLFLCLKDSREIPLTGVDQPAALNKIENEAVTLAKYLNVFLETE.

The next 2 membrane-spanning stretches (helical) occupy residues 11–31 (LSNI…FLNG) and 56–76 (IILM…CLTI).

Belongs to the Ycf4 family.

The protein resides in the plastid. It is found in the chloroplast thylakoid membrane. Functionally, seems to be required for the assembly of the photosystem I complex. The chain is Photosystem I assembly protein Ycf4 from Emiliania huxleyi (Coccolithophore).